A 199-amino-acid polypeptide reads, in one-letter code: Rho-related protein racG (199 aa).

GTP-binding residues include Ala13, Gly15, Lys16, Thr17, Cys18, Tyr32, and Thr35. Residue Thr17 coordinates Mg(2+). Short sequence motifs (switch) lie at residues 26–37 and 57–75; these read NAFPNEYIPTVF and DTAGQEDYDRLRPLSYPST. Residue Thr35 coordinates Mg(2+). Residues Lys116, Asp118, and Ala159 each coordinate GTP. Cys196 carries the post-translational modification Cysteine methyl ester. Cys196 carries the S-geranylgeranyl cysteine lipid modification. A propeptide spans 197-199 (removed in mature form); it reads SLF.

It belongs to the small GTPase superfamily. Rho family. Mg(2+) serves as cofactor.

It is found in the cell membrane. The protein localises to the cytoplasm. It localises to the cytoskeleton. The catalysed reaction is GTP + H2O = GDP + phosphate + H(+). Its activity is regulated as follows. Regulated by guanine nucleotide exchange factors (GEFs) which promote the exchange of bound GDP for free GTP, GTPase activating proteins (GAPs) which increase the GTP hydrolysis activity, and GDP dissociation inhibitors which inhibit the dissociation of the nucleotide from the GTPase. Its function is as follows. Small GTPase which cycles between active GTP-bound and inactive GDP-bound states. Involved in actin cytoskeleton remodeling during capping of surface receptors and uroid formation. The polypeptide is Rho-related protein racG (Entamoeba histolytica (strain ATCC 30459 / HM-1:IMSS / ABRM)).